The chain runs to 345 residues: Anthranilate phosphoribosyltransferase (345 aa).

5-phospho-alpha-D-ribose 1-diphosphate contacts are provided by residues G84, 87-88, T92, 94-97, 112-120, and S124; these read GD, NIST, and KHGNRSVSS. G84 contacts anthranilate. Residue S96 coordinates Mg(2+). Anthranilate is bound at residue N115. R170 contributes to the anthranilate binding site. Positions 229 and 230 each coordinate Mg(2+).

It belongs to the anthranilate phosphoribosyltransferase family. In terms of assembly, homodimer. It depends on Mg(2+) as a cofactor.

The catalysed reaction is N-(5-phospho-beta-D-ribosyl)anthranilate + diphosphate = 5-phospho-alpha-D-ribose 1-diphosphate + anthranilate. Its pathway is amino-acid biosynthesis; L-tryptophan biosynthesis; L-tryptophan from chorismate: step 2/5. Its function is as follows. Catalyzes the transfer of the phosphoribosyl group of 5-phosphorylribose-1-pyrophosphate (PRPP) to anthranilate to yield N-(5'-phosphoribosyl)-anthranilate (PRA). The protein is Anthranilate phosphoribosyltransferase of Xanthomonas axonopodis pv. citri (strain 306).